Here is a 177-residue protein sequence, read N- to C-terminus: CASP-like protein 5A2 (177 aa).

Residues 1-36 lie on the Cytoplasmic side of the membrane; that stretch reads MNASHPAVHPVGVPPAVAGQLPPRMRMKEIQGMPGT. The chain crosses the membrane as a helical span at residues 37-57; the sequence is IGGLLLRLGQFCFALVAFSIM. Residues 58-68 lie on the Extracellular side of the membrane; that stretch reads VSIENFSTVTA. N62 carries N-linked (GlcNAc...) asparagine glycosylation. The helical transmembrane segment at 69–89 threads the bilayer; it reads FCYLVAATVLQCLWSLALAII. Residues 90–103 lie on the Cytoplasmic side of the membrane; it reads DGYALLVKRSLRNS. Residues 104–124 traverse the membrane as a helical segment; that stretch reads LLVSLLVVGDGVTATLTFAAA. Residues 125–153 are Extracellular-facing; sequence CASAGITVLIGNDLRQCKENHCARYETAT. A helical membrane pass occupies residues 154-174; that stretch reads ALAFLSWFMVSLSFILTFWLL. Topologically, residues 175 to 177 are cytoplasmic; sequence ATR.

It belongs to the Casparian strip membrane proteins (CASP) family. In terms of assembly, homodimer and heterodimers.

It localises to the cell membrane. This chain is CASP-like protein 5A2, found in Ginkgo biloba (Ginkgo).